The primary structure comprises 244 residues: 6-carboxyhexanoate--CoA ligase (244 aa).

It belongs to the BioW family. As to quaternary structure, homodimer. Mg(2+) serves as cofactor.

The enzyme catalyses heptanedioate + ATP + CoA = 6-carboxyhexanoyl-CoA + AMP + diphosphate. It functions in the pathway metabolic intermediate metabolism; pimeloyl-CoA biosynthesis; pimeloyl-CoA from pimelate: step 1/1. Functionally, catalyzes the transformation of pimelate into pimeloyl-CoA with concomitant hydrolysis of ATP to AMP. This chain is 6-carboxyhexanoate--CoA ligase, found in Hydrogenobacter thermophilus (strain DSM 6534 / IAM 12695 / TK-6).